The primary structure comprises 248 residues: Ribonuclease PH (248 aa).

Residues Arg86 and 124-126 contribute to the phosphate site; that span reads GTR.

Belongs to the RNase PH family. As to quaternary structure, homohexameric ring arranged as a trimer of dimers.

The enzyme catalyses tRNA(n+1) + phosphate = tRNA(n) + a ribonucleoside 5'-diphosphate. Its function is as follows. Phosphorolytic 3'-5' exoribonuclease that plays an important role in tRNA 3'-end maturation. Removes nucleotide residues following the 3'-CCA terminus of tRNAs; can also add nucleotides to the ends of RNA molecules by using nucleoside diphosphates as substrates, but this may not be physiologically important. Probably plays a role in initiation of 16S rRNA degradation (leading to ribosome degradation) during starvation. This is Ribonuclease PH from Clostridium perfringens (strain 13 / Type A).